A 316-amino-acid chain; its full sequence is Ribosomal RNA small subunit methyltransferase H (316 aa).

Residues 35 to 37 (GGH), Asp55, Phe80, Asp102, and Gln109 each bind S-adenosyl-L-methionine.

The protein belongs to the methyltransferase superfamily. RsmH family.

The protein resides in the cytoplasm. The catalysed reaction is cytidine(1402) in 16S rRNA + S-adenosyl-L-methionine = N(4)-methylcytidine(1402) in 16S rRNA + S-adenosyl-L-homocysteine + H(+). Specifically methylates the N4 position of cytidine in position 1402 (C1402) of 16S rRNA. In Colwellia psychrerythraea (strain 34H / ATCC BAA-681) (Vibrio psychroerythus), this protein is Ribosomal RNA small subunit methyltransferase H.